The chain runs to 253 residues: Probable transcriptional regulatory protein Tlet_1011 (253 aa).

It belongs to the TACO1 family.

Its subcellular location is the cytoplasm. The sequence is that of Probable transcriptional regulatory protein Tlet_1011 from Pseudothermotoga lettingae (strain ATCC BAA-301 / DSM 14385 / NBRC 107922 / TMO) (Thermotoga lettingae).